The following is a 59-amino-acid chain: QKDCSLPVDTGRGKGWFLRYYYNKNSKTCESFIYGGVGGNKNNFLNIENCCKICKAKNC.

The region spanning Cys-4 to Cys-54 is the BPTI/Kunitz inhibitor domain. Intrachain disulfides connect Cys-4–Cys-54, Cys-29–Cys-50, and Cys-51–Cys-59.

This sequence belongs to the venom Kunitz-type family. Scorpion delta-Ktx subfamily. Delta-Ktx 2 sub-subfamily. In terms of tissue distribution, expressed by the venom gland.

The protein resides in the secreted. Functionally, dual-function toxin that completely inhibits trypsin activity at a molar ratio of 1:1 (Ki=136 nM) and that inhibits mKv1.3/KCNA3 potassium channel currents (IC(50)=129.7 nM). The polypeptide is Kunitz-type serine protease inhibitor BmKTT-1 (Olivierus martensii (Manchurian scorpion)).